A 451-amino-acid polypeptide reads, in one-letter code: Trigger factor (451 aa).

One can recognise a PPIase FKBP-type domain in the interval 165-250 (DDKLTIDFEG…LHQIQVREAL (86 aa)).

This sequence belongs to the FKBP-type PPIase family. Tig subfamily.

It localises to the cytoplasm. The enzyme catalyses [protein]-peptidylproline (omega=180) = [protein]-peptidylproline (omega=0). In terms of biological role, involved in protein export. Acts as a chaperone by maintaining the newly synthesized protein in an open conformation. Functions as a peptidyl-prolyl cis-trans isomerase. In Helicobacter pylori (strain P12), this protein is Trigger factor.